We begin with the raw amino-acid sequence, 550 residues long: Arginine--tRNA ligase (550 aa).

The 'HIGH' region motif lies at 130-140; it reads ANPTGPIHLGG.

Belongs to the class-I aminoacyl-tRNA synthetase family. In terms of assembly, monomer.

It is found in the cytoplasm. The enzyme catalyses tRNA(Arg) + L-arginine + ATP = L-arginyl-tRNA(Arg) + AMP + diphosphate. This is Arginine--tRNA ligase (argS) from Corynebacterium glutamicum (strain ATCC 13032 / DSM 20300 / JCM 1318 / BCRC 11384 / CCUG 27702 / LMG 3730 / NBRC 12168 / NCIMB 10025 / NRRL B-2784 / 534).